The sequence spans 577 residues: Autophagy-related protein 20 (577 aa).

Residues 57-81 form a disordered region; the sequence is GQSYVAPHSGGGRTSSGSSSSASLQ. The 145-residue stretch at 95–239 folds into the PX domain; the sequence is GEQGRVRILE…DFLDPNNANW (145 aa). The a 1,2-diacyl-sn-glycero-3-phospho-(1D-myo-inositol-3-phosphate) site is built by Arg-131, Ser-133, Lys-157, and Arg-205.

The protein belongs to the sorting nexin family.

It is found in the endosome membrane. Its subcellular location is the preautophagosomal structure membrane. Its function is as follows. Required for cytoplasm to vacuole transport (Cvt), pexophagy and mitophagy. Also involved in endoplasmic reticulum-specific autophagic process and is essential for the survival of cells subjected to severe ER stress. Functions in protein retrieval from the endocytic pathway. The protein is Autophagy-related protein 20 (ATG20) of Eremothecium gossypii (strain ATCC 10895 / CBS 109.51 / FGSC 9923 / NRRL Y-1056) (Yeast).